The chain runs to 215 residues: Oligoribonuclease (215 aa).

The Exonuclease domain occupies 5–170 (LVWIDCEMTG…ADIHESIREL (166 aa)). Tyr127 is a catalytic residue. The segment at 196–215 (LDEGKDAPGPSDSASAPPTG) is disordered. Residues 202-215 (APGPSDSASAPPTG) are compositionally biased toward low complexity.

Belongs to the oligoribonuclease family.

Its subcellular location is the cytoplasm. In terms of biological role, 3'-to-5' exoribonuclease specific for small oligoribonucleotides. This Mycolicibacterium paratuberculosis (strain ATCC BAA-968 / K-10) (Mycobacterium paratuberculosis) protein is Oligoribonuclease.